Reading from the N-terminus, the 262-residue chain is Phosphatidylserine decarboxylase proenzyme (262 aa).

Residues aspartate 86, histidine 142, and serine 226 each act as charge relay system; for autoendoproteolytic cleavage activity in the active site. The active-site Schiff-base intermediate with substrate; via pyruvic acid; for decarboxylase activity is the serine 226. Serine 226 carries the pyruvic acid (Ser); by autocatalysis modification.

Belongs to the phosphatidylserine decarboxylase family. PSD-B subfamily. Prokaryotic type I sub-subfamily. Heterodimer of a large membrane-associated beta subunit and a small pyruvoyl-containing alpha subunit. It depends on pyruvate as a cofactor. Is synthesized initially as an inactive proenzyme. Formation of the active enzyme involves a self-maturation process in which the active site pyruvoyl group is generated from an internal serine residue via an autocatalytic post-translational modification. Two non-identical subunits are generated from the proenzyme in this reaction, and the pyruvate is formed at the N-terminus of the alpha chain, which is derived from the carboxyl end of the proenzyme. The autoendoproteolytic cleavage occurs by a canonical serine protease mechanism, in which the side chain hydroxyl group of the serine supplies its oxygen atom to form the C-terminus of the beta chain, while the remainder of the serine residue undergoes an oxidative deamination to produce ammonia and the pyruvoyl prosthetic group on the alpha chain. During this reaction, the Ser that is part of the protease active site of the proenzyme becomes the pyruvoyl prosthetic group, which constitutes an essential element of the active site of the mature decarboxylase.

The protein resides in the cell membrane. The enzyme catalyses a 1,2-diacyl-sn-glycero-3-phospho-L-serine + H(+) = a 1,2-diacyl-sn-glycero-3-phosphoethanolamine + CO2. It participates in phospholipid metabolism; phosphatidylethanolamine biosynthesis; phosphatidylethanolamine from CDP-diacylglycerol: step 2/2. In terms of biological role, catalyzes the formation of phosphatidylethanolamine (PtdEtn) from phosphatidylserine (PtdSer). The protein is Phosphatidylserine decarboxylase proenzyme of Bacillus cereus (strain ZK / E33L).